The following is a 151-amino-acid chain: Desiccation-related protein PCC27-45 (151 aa).

The protein belongs to the LEA type 2 family.

The polypeptide is Desiccation-related protein PCC27-45 (Craterostigma plantagineum (Blue gem)).